The chain runs to 132 residues: Small ribosomal subunit protein uS8 (132 aa).

Belongs to the universal ribosomal protein uS8 family. Part of the 30S ribosomal subunit. Contacts proteins S5 and S12.

Its function is as follows. One of the primary rRNA binding proteins, it binds directly to 16S rRNA central domain where it helps coordinate assembly of the platform of the 30S subunit. In Francisella tularensis subsp. novicida (strain U112), this protein is Small ribosomal subunit protein uS8.